The following is a 190-amino-acid chain: Peptidoglycan recognition protein 1 (190 aa).

A signal peptide spans M1–A21. At Q22 the chain carries Pyrrolidone carboxylic acid. Cystine bridges form between C24/C148, C40/C85, and C61/C67. Positions Q46 to G174 constitute an N-acetylmuramoyl-L-alanine amidase domain.

It belongs to the N-acetylmuramoyl-L-alanine amidase 2 family. As to quaternary structure, homodimer; disulfide-linked. In terms of tissue distribution, synthesized only in bone marrow. The mature protein is stored in the cytoplasmic granules of eosinophils and neutrophils but is absent from monocytes, lymphocytes, or platelets.

It is found in the secreted. It localises to the cytoplasmic granule. Its function is as follows. Innate immunity protein that plays several important functions in antimicrobial and antitumor defense systems. Acts as a pattern receptor that binds to murein peptidoglycans (PGN) of Gram-positive bacteria and thus provides bactericidal activity. Forms an equimolar complex with heat shock protein HSPA1A and induces programmed cell death through apoptosis and necroptosis in tumor cell lines by activating the TNFR1 receptor on the target cell membrane. In addition, acts in complex with the Ca(2+)-binding protein S100A4 as a chemoattractant able to induce lymphocyte movement. Mechanistically, this complex acts as a ligand of the chemotactic receptors CCR5 and CXCR3 which are present on the cells of the immune system. Also promotes the activation of lymphocytes that become able to kill virus-infected cells as well as tumor cells by modulating the spectrum of their target-cell specificity. Induction of cytotoxicity on monocyte surface requires interaction with TREM1 receptor. The sequence is that of Peptidoglycan recognition protein 1 (PGLYRP1) from Bos taurus (Bovine).